We begin with the raw amino-acid sequence, 610 residues long: V-type proton ATPase catalytic subunit A (610 aa).

Gly245–Thr252 contacts ATP.

This sequence belongs to the ATPase alpha/beta chains family. As to quaternary structure, V-ATPase is a heteromultimeric enzyme composed of a peripheral catalytic V1 complex (main components: subunits A, B, C, D, E, and F) attached to an integral membrane V0 proton pore complex (main component: the proteolipid protein).

It carries out the reaction ATP + H2O + 4 H(+)(in) = ADP + phosphate + 5 H(+)(out). Functionally, catalytic subunit of the peripheral V1 complex of vacuolar ATPase. V-ATPase vacuolar ATPase is responsible for acidifying a variety of intracellular compartments in eukaryotic cells. This chain is V-type proton ATPase catalytic subunit A, found in Trypanosoma congolense.